We begin with the raw amino-acid sequence, 62 residues long: Amolopin-p-MT1 (62 aa).

Residues 1–22 form the signal peptide; the sequence is MFTLKKSLLLLFFLGTISLSLC. Residues 23-42 constitute a propeptide, removed in mature form; sequence EQERGADEEENGGEVTEEEV.

This sequence belongs to the frog skin active peptide (FSAP) family. Brevinin subfamily. As to expression, expressed by the skin glands.

The protein resides in the secreted. Its function is as follows. Antimicrobial peptide. Active against a variety of Gram-negative and Gram-positive bacterial strains. Not active against fungi. Shows weak hemolytic activity against human erythrocytes. The chain is Amolopin-p-MT1 from Amolops mantzorum (Sichuan torrent frog).